Consider the following 402-residue polypeptide: uncharacterized protein (402 aa).

The Cytoplasmic segment spans residues 1 to 11; that stretch reads MTPSNYQRTRW. The chain crosses the membrane as a helical span at residues 12 to 34; the sequence is LTLIGTIITQFALGSVYTWSLFN. Over 35 to 43 the chain is Periplasmic; sequence GALSAKLDA. Residues 44 to 66 form a helical membrane-spanning segment; it reads PVSQVAFSFGLLSLGLAISSSVA. Over 67 to 72 the chain is Cytoplasmic; the sequence is GKLQER. Residues 73-95 form a helical membrane-spanning segment; sequence FGVKRVTMASGILLGLGFFLTAH. Topologically, residues 96–99 are periplasmic; that stretch reads SDNL. Residues 100 to 122 form a helical membrane-spanning segment; it reads MMLWLSAGVLVGLADGAGYLLTL. At 123–134 the chain is on the cytoplasmic side; sequence SNCVKWFPERKG. The helical transmembrane segment at 135–154 threads the bilayer; that stretch reads LISAFAIGSYGLGSLGFKFI. Topologically, residues 155-168 are periplasmic; that stretch reads DTQLLETVGLEKTF. Residues 169 to 186 traverse the membrane as a helical segment; it reads VIWGAIALLMIVFGATLM. Over 187-216 the chain is Cytoplasmic; the sequence is KDAPKQEVKTSNGVVEKDYTLAESMRKPQY. A helical membrane pass occupies residues 217-236; sequence WMLAVMFLTACMSGLYVIGV. Residues 237 to 250 lie on the Periplasmic side of the membrane; it reads AKDIAQSLAHLDVV. Residues 251 to 273 traverse the membrane as a helical segment; the sequence is SAANAVTVISIANLSGRLVLGIL. Residues 274 to 279 are Cytoplasmic-facing; that stretch reads SDKIAR. Residues 280-302 form a helical membrane-spanning segment; it reads IRVITIGQVISLVGMAALLFAPL. Residues 303–306 are Periplasmic-facing; the sequence is NAVT. A helical transmembrane segment spans residues 307–329; the sequence is FFAAIACVAFNFGGTITVFPSLV. Topologically, residues 330–341 are cytoplasmic; the sequence is SEFFGLNNLAKN. The helical transmembrane segment at 342-364 threads the bilayer; sequence YGVIYLGFGIGSICGSIIASLFG. Topologically, residues 365–367 are periplasmic; that stretch reads GFY. Residues 368–387 traverse the membrane as a helical segment; it reads VTFYVIFALLILSLALSTTI. The Cytoplasmic segment spans residues 388–402; it reads RQPEQKMLREAHGSL.

The protein belongs to the major facilitator superfamily. In terms of assembly, interacts with BtsS and YpdA.

It is found in the cell inner membrane. Its function is as follows. Part of a nutrient-sensing regulatory network composed of the two-component regulatory systems BtsS/BtsR and YpdA/YpdB, and their respective target proteins, BtsT and YhjX. This is an uncharacterized protein from Escherichia coli (strain K12).